The chain runs to 259 residues: Phosphoadenosine 5'-phosphosulfate reductase (259 aa).

Cys-244 functions as the Nucleophile; cysteine thiosulfonate intermediate in the catalytic mechanism.

This sequence belongs to the PAPS reductase family. CysH subfamily.

Its subcellular location is the cytoplasm. The catalysed reaction is [thioredoxin]-disulfide + sulfite + adenosine 3',5'-bisphosphate + 2 H(+) = [thioredoxin]-dithiol + 3'-phosphoadenylyl sulfate. The protein operates within sulfur metabolism; hydrogen sulfide biosynthesis; sulfite from sulfate: step 3/3. Catalyzes the formation of sulfite from phosphoadenosine 5'-phosphosulfate (PAPS) using thioredoxin as an electron donor. The protein is Phosphoadenosine 5'-phosphosulfate reductase of Vibrio campbellii (strain ATCC BAA-1116).